The following is a 224-amino-acid chain: MAEQPAGGQGAGDSRDSRGDRDSRGRRGDGGRGGRDRDGDKSNYLERVVAINRVSKVVKGGRRFSFTALVIVGDGNGMVGVGYGKAKEVPAAIAKGVEEARKGFFRVPLIRGTITHPVQGEAAAGVVLLRPASPGTGVIAGGAARAVLECAGVHDILAKSLGSDNAINVVHATVAALKLLQRPEEVAARRGLPIEDVAPAGMLKARRESDALASAAAAREAAAQ.

Positions 1–40 are disordered; sequence MAEQPAGGQGAGDSRDSRGDRDSRGRRGDGGRGGRDRDGD. Positions 13-40 are enriched in basic and acidic residues; that stretch reads DSRDSRGDRDSRGRRGDGGRGGRDRDGD. The 64-residue stretch at 44–107 folds into the S5 DRBM domain; the sequence is YLERVVAINR…EEARKGFFRV (64 aa).

The protein belongs to the universal ribosomal protein uS5 family. As to quaternary structure, part of the 30S ribosomal subunit. Contacts proteins S4 and S8.

With S4 and S12 plays an important role in translational accuracy. Functionally, located at the back of the 30S subunit body where it stabilizes the conformation of the head with respect to the body. The sequence is that of Small ribosomal subunit protein uS5 from Mycolicibacterium paratuberculosis (strain ATCC BAA-968 / K-10) (Mycobacterium paratuberculosis).